Here is a 213-residue protein sequence, read N- to C-terminus: Transcription antitermination protein NusB (213 aa).

Belongs to the NusB family.

Its function is as follows. Involved in transcription antitermination. Required for transcription of ribosomal RNA (rRNA) genes. Binds specifically to the boxA antiterminator sequence of the ribosomal RNA (rrn) operons. This Nostoc punctiforme (strain ATCC 29133 / PCC 73102) protein is Transcription antitermination protein NusB.